The following is a 529-amino-acid chain: Bifunctional purine biosynthesis protein PurH (529 aa).

Positions 1–148 (MQQRRPVRRA…KNHKDVAIVV (148 aa)) constitute an MGS-like domain.

This sequence belongs to the PurH family.

It carries out the reaction (6R)-10-formyltetrahydrofolate + 5-amino-1-(5-phospho-beta-D-ribosyl)imidazole-4-carboxamide = 5-formamido-1-(5-phospho-D-ribosyl)imidazole-4-carboxamide + (6S)-5,6,7,8-tetrahydrofolate. The catalysed reaction is IMP + H2O = 5-formamido-1-(5-phospho-D-ribosyl)imidazole-4-carboxamide. Its pathway is purine metabolism; IMP biosynthesis via de novo pathway; 5-formamido-1-(5-phospho-D-ribosyl)imidazole-4-carboxamide from 5-amino-1-(5-phospho-D-ribosyl)imidazole-4-carboxamide (10-formyl THF route): step 1/1. It participates in purine metabolism; IMP biosynthesis via de novo pathway; IMP from 5-formamido-1-(5-phospho-D-ribosyl)imidazole-4-carboxamide: step 1/1. The sequence is that of Bifunctional purine biosynthesis protein PurH from Salmonella typhi.